Here is a 354-residue protein sequence, read N- to C-terminus: Glutamine synthetase (354 aa).

The GS beta-grasp domain maps to 22–101 (IQAEYVWIDG…VLAETYNNDG (80 aa)). Residues 108 to 354 (HRHHAKKVFD…IIAETTILDK (247 aa)) form the GS catalytic domain.

This sequence belongs to the glutamine synthetase family. In terms of assembly, homooctamer.

The protein localises to the cytoplasm. The enzyme catalyses L-glutamate + NH4(+) + ATP = L-glutamine + ADP + phosphate + H(+). This chain is Glutamine synthetase (glnA), found in Agaricus bisporus (White button mushroom).